The following is a 249-amino-acid chain: LexA repressor (249 aa).

Residues M1–Q25 are disordered. Positions M45–S65 form a DNA-binding region, H-T-H motif. Residues S173 and K210 each act as for autocatalytic cleavage activity in the active site.

This sequence belongs to the peptidase S24 family. Homodimer.

It carries out the reaction Hydrolysis of Ala-|-Gly bond in repressor LexA.. In terms of biological role, represses a number of genes involved in the response to DNA damage (SOS response), including recA and lexA. In the presence of single-stranded DNA, RecA interacts with LexA causing an autocatalytic cleavage which disrupts the DNA-binding part of LexA, leading to derepression of the SOS regulon and eventually DNA repair. The protein is LexA repressor of Pseudarthrobacter chlorophenolicus (strain ATCC 700700 / DSM 12829 / CIP 107037 / JCM 12360 / KCTC 9906 / NCIMB 13794 / A6) (Arthrobacter chlorophenolicus).